The primary structure comprises 149 residues: Immunoglobulin kappa chain variable 6-17 (149 aa).

The first 29 residues, 1-29 (MHHTSMGIKMESQIQVFVFVFLWLSGVDG), serve as a signal peptide directing secretion. 2 consecutive repeats follow at residues 26–35 (GVDGDIVMTQ) and 38–47 (GVDGDIVMTQ). The framework-1 stretch occupies residues 42 to 64 (DIVMTQSHKFMSTSVGDRVSITC). The segment at 65 to 75 (KASQDVSTTVA) is complementarity-determining-1. Positions 76–90 (WYQQKPGQSPKLLIY) are framework-2. The complementarity-determining-2 stretch occupies residues 91–97 (SASYRYT). Positions 98 to 129 (GVPDRFTGSGSGTDFTFTISSVQAEDLAVYYC) are framework-3. The interval 130–138 (QQHYSTPPT) is complementarity-determining-3. The interval 139-148 (FGGGTKLEIK) is framework-4.

The sequence is that of Immunoglobulin kappa chain variable 6-17 from Mus musculus (Mouse).